The chain runs to 149 residues: UPF0208 membrane protein VSAL_I2111 (149 aa).

The next 2 membrane-spanning stretches (helical) occupy residues 41 to 61 (FAVK…MVFN) and 69 to 89 (SIII…WLGN).

Belongs to the UPF0208 family.

The protein resides in the cell inner membrane. The polypeptide is UPF0208 membrane protein VSAL_I2111 (Aliivibrio salmonicida (strain LFI1238) (Vibrio salmonicida (strain LFI1238))).